Consider the following 241-residue polypeptide: Deoxynucleotide monophosphate kinase (241 aa).

Lys10 provides a ligand contact to dGMP. 4 residues coordinate ATP: Arg11, Gly13, Asp15, and Thr16. Residues Ile36 and Lys37 each coordinate dGMP. Residue Tyr42 participates in Mg(2+) binding. Arg68 is a binding site for dGMP. Residues Gln85 and Glu108 each coordinate Mg(2+). Arg132, Gly139, Thr140, Val144, Trp152, Asp175, Arg177, Gln178, Glu181, and Thr208 together coordinate dGMP.

The protein belongs to the dNMP kinase family. In terms of assembly, homodimer. The cofactor is Mg(2+).

The catalysed reaction is dTMP + ATP = dTDP + ADP. The enzyme catalyses dGMP + ATP = dGDP + ADP. It catalyses the reaction 5-hydroxymethyl-dCMP + ATP = 5-hydroxymethyl-dCDP + ADP. Its activity is regulated as follows. Inhibited by pyridoxal 5'-phosphate and diethylpyrocarbonate. Its function is as follows. Allows the synthesis of deoxyribonucleoside triphosphates necessary for the rapid viral DNA replication. Phosphorylates dGMP, dTMP and 5-hydroxymethyl-dCMP (hmdCMP) while excluding dCMP and dAMP. The phosphorylation of 5-hydroxymethyl-dCMP represents the first step in the replacement of cytosine by hydroxymethylcytosine in new viral DNA genomes. This is Deoxynucleotide monophosphate kinase (1) from Enterobacteria phage T4 (Bacteriophage T4).